A 310-amino-acid chain; its full sequence is Ribonuclease HIII (310 aa).

Residues 90–306 form the RNase H type-2 domain; it reads FQCIGSDEAG…RKKAENLVQK (217 aa). Residues Asp-96, Glu-97, and Asp-201 each coordinate a divalent metal cation.

The protein belongs to the RNase HII family. RnhC subfamily. Requires Mn(2+) as cofactor. It depends on Mg(2+) as a cofactor.

It localises to the cytoplasm. It carries out the reaction Endonucleolytic cleavage to 5'-phosphomonoester.. Its function is as follows. Endonuclease that specifically degrades the RNA of RNA-DNA hybrids. This is Ribonuclease HIII from Staphylococcus saprophyticus subsp. saprophyticus (strain ATCC 15305 / DSM 20229 / NCIMB 8711 / NCTC 7292 / S-41).